A 577-amino-acid chain; its full sequence is Aspartate--tRNA(Asp/Asn) ligase (577 aa).

An L-aspartate-binding site is contributed by Glu-171. Residues 195-198 form an aspartate region; that stretch reads QLFK. Position 217 (Arg-217) interacts with L-aspartate. Residues 217 to 219 and Gln-226 each bind ATP; that span reads RDE. Residue His-444 coordinates L-aspartate. Glu-474 is a binding site for ATP. Arg-481 provides a ligand contact to L-aspartate. Residue 526 to 529 coordinates ATP; it reads GFDR.

It belongs to the class-II aminoacyl-tRNA synthetase family. Type 1 subfamily. As to quaternary structure, homodimer.

It is found in the cytoplasm. It carries out the reaction tRNA(Asx) + L-aspartate + ATP = L-aspartyl-tRNA(Asx) + AMP + diphosphate. Aspartyl-tRNA synthetase with relaxed tRNA specificity since it is able to aspartylate not only its cognate tRNA(Asp) but also tRNA(Asn). Reaction proceeds in two steps: L-aspartate is first activated by ATP to form Asp-AMP and then transferred to the acceptor end of tRNA(Asp/Asn). The sequence is that of Aspartate--tRNA(Asp/Asn) ligase from Helicobacter pylori (strain G27).